We begin with the raw amino-acid sequence, 572 residues long: Enolase 4 (572 aa).

The tract at residues 181-204 (IEPVPSPVTSPALGKKKGSGKGKK) is disordered. Residues 194-204 (GKKKGSGKGKK) show a composition bias toward basic residues. Substrate is bound at residue Glu-288. Catalysis depends on Lys-468, which acts as the Proton acceptor. Lys-519 is a substrate binding site.

It belongs to the enolase family.

The enzyme catalyses (2R)-2-phosphoglycerate = phosphoenolpyruvate + H2O. Its pathway is carbohydrate degradation; glycolysis; pyruvate from D-glyceraldehyde 3-phosphate: step 4/5. The sequence is that of Enolase 4 (eno4) from Xenopus laevis (African clawed frog).